The chain runs to 1223 residues: DNA-directed RNA polymerase subunit beta'' (1223 aa).

Residues C233, C307, C314, and C317 each coordinate Zn(2+).

This sequence belongs to the RNA polymerase beta' chain family. RpoC2 subfamily. In plastids the minimal PEP RNA polymerase catalytic core is composed of four subunits: alpha, beta, beta', and beta''. When a (nuclear-encoded) sigma factor is associated with the core the holoenzyme is formed, which can initiate transcription. It depends on Zn(2+) as a cofactor.

It localises to the plastid. The protein localises to the chloroplast. It catalyses the reaction RNA(n) + a ribonucleoside 5'-triphosphate = RNA(n+1) + diphosphate. In terms of biological role, DNA-dependent RNA polymerase catalyzes the transcription of DNA into RNA using the four ribonucleoside triphosphates as substrates. The polypeptide is DNA-directed RNA polymerase subunit beta'' (Mesostigma viride (Green alga)).